Here is a 1077-residue protein sequence, read N- to C-terminus: Carbamoyl phosphate synthase large chain (1077 aa).

The segment at 1–403 (MPKRTDIQSI…SLHKALRGLE (403 aa)) is carboxyphosphate synthetic domain. ATP is bound by residues Arg-129, Arg-169, Gly-175, Gly-176, Glu-208, Leu-210, Glu-215, Gly-241, Ile-242, His-243, Gln-285, and Glu-299. The ATP-grasp 1 domain maps to 133–328 (DKAMKSIGLE…IAKIAAKLAV (196 aa)). Residues Gln-285, Glu-299, and Asn-301 each contribute to the Mg(2+) site. The Mn(2+) site is built by Gln-285, Glu-299, and Asn-301. The interval 404 to 553 (VGATGFDEMV…YSSYDDECEA (150 aa)) is oligomerization domain. The carbamoyl phosphate synthetic domain stretch occupies residues 554–935 (NPTDKEKIMV…AYAKAELGCG (382 aa)). The ATP-grasp 2 domain maps to 678 to 869 (QQAVDRLGLL…LAKIAARVMA (192 aa)). The ATP site is built by Arg-714, Arg-753, Leu-755, Glu-760, Gly-785, Val-786, His-787, Ser-788, Gln-828, and Glu-840. Residues Gln-828, Glu-840, and Asn-842 each contribute to the Mg(2+) site. Mn(2+)-binding residues include Gln-828, Glu-840, and Asn-842. The MGS-like domain maps to 936 to 1077 (NVYPEGGRAL…HAQVQASLKA (142 aa)). Residues 936-1077 (NVYPEGGRAL…HAQVQASLKA (142 aa)) form an allosteric domain region.

It belongs to the CarB family. In terms of assembly, composed of two chains; the small (or glutamine) chain promotes the hydrolysis of glutamine to ammonia, which is used by the large (or ammonia) chain to synthesize carbamoyl phosphate. Tetramer of heterodimers (alpha,beta)4. Mg(2+) serves as cofactor. The cofactor is Mn(2+).

The catalysed reaction is hydrogencarbonate + L-glutamine + 2 ATP + H2O = carbamoyl phosphate + L-glutamate + 2 ADP + phosphate + 2 H(+). It catalyses the reaction hydrogencarbonate + NH4(+) + 2 ATP = carbamoyl phosphate + 2 ADP + phosphate + 2 H(+). The protein operates within amino-acid biosynthesis; L-arginine biosynthesis; carbamoyl phosphate from bicarbonate: step 1/1. Its pathway is pyrimidine metabolism; UMP biosynthesis via de novo pathway; (S)-dihydroorotate from bicarbonate: step 1/3. Its function is as follows. Large subunit of the glutamine-dependent carbamoyl phosphate synthetase (CPSase). CPSase catalyzes the formation of carbamoyl phosphate from the ammonia moiety of glutamine, carbonate, and phosphate donated by ATP, constituting the first step of 2 biosynthetic pathways, one leading to arginine and/or urea and the other to pyrimidine nucleotides. The large subunit (synthetase) binds the substrates ammonia (free or transferred from glutamine from the small subunit), hydrogencarbonate and ATP and carries out an ATP-coupled ligase reaction, activating hydrogencarbonate by forming carboxy phosphate which reacts with ammonia to form carbamoyl phosphate. The chain is Carbamoyl phosphate synthase large chain from Vibrio vulnificus (strain CMCP6).